The sequence spans 170 residues: Lipoprotein signal peptidase (170 aa).

3 helical membrane passes run 9–29, 72–92, and 93–113; these read IGSV…KYLV, LFFL…ILKE, and TNKI…GNII. Active-site residues include Asp124 and Asp146. A helical transmembrane segment spans residues 142-162; that stretch reads FNFADSYVVIGITLFIIYDLF.

It belongs to the peptidase A8 family.

Its subcellular location is the cell inner membrane. It carries out the reaction Release of signal peptides from bacterial membrane prolipoproteins. Hydrolyzes -Xaa-Yaa-Zaa-|-(S,diacylglyceryl)Cys-, in which Xaa is hydrophobic (preferably Leu), and Yaa (Ala or Ser) and Zaa (Gly or Ala) have small, neutral side chains.. It participates in protein modification; lipoprotein biosynthesis (signal peptide cleavage). This protein specifically catalyzes the removal of signal peptides from prolipoproteins. In Borrelia hermsii (strain HS1 / DAH), this protein is Lipoprotein signal peptidase.